We begin with the raw amino-acid sequence, 428 residues long: Adenylosuccinate synthetase (428 aa).

Residues 12 to 18 and 40 to 42 each bind GTP; these read GDEGKGK and GHT. The Proton acceptor role is filled by aspartate 13. Aspartate 13 and glycine 40 together coordinate Mg(2+). Residues 13-16, 38-41, threonine 130, arginine 144, glutamine 225, threonine 240, and arginine 304 contribute to the IMP site; these read DEGK and NAGH. Histidine 41 (proton donor) is an active-site residue. Position 300-306 (300-306) interacts with substrate; it reads VTTGRSR. Residues arginine 306, 332 to 334, and 414 to 416 each bind GTP; these read KID and GVG.

It belongs to the adenylosuccinate synthetase family. As to quaternary structure, homodimer. Mg(2+) is required as a cofactor.

It is found in the cytoplasm. The enzyme catalyses IMP + L-aspartate + GTP = N(6)-(1,2-dicarboxyethyl)-AMP + GDP + phosphate + 2 H(+). It functions in the pathway purine metabolism; AMP biosynthesis via de novo pathway; AMP from IMP: step 1/2. In terms of biological role, plays an important role in the de novo pathway of purine nucleotide biosynthesis. Catalyzes the first committed step in the biosynthesis of AMP from IMP. The polypeptide is Adenylosuccinate synthetase (Clostridium botulinum (strain Alaska E43 / Type E3)).